The chain runs to 408 residues: Succinylornithine transaminase (408 aa).

Position 252 is an N6-(pyridoxal phosphate)lysine (K252).

Belongs to the class-III pyridoxal-phosphate-dependent aminotransferase family. AstC subfamily. Requires pyridoxal 5'-phosphate as cofactor.

The catalysed reaction is N(2)-succinyl-L-ornithine + 2-oxoglutarate = N-succinyl-L-glutamate 5-semialdehyde + L-glutamate. It participates in amino-acid degradation; L-arginine degradation via AST pathway; L-glutamate and succinate from L-arginine: step 3/5. Catalyzes the transamination of N(2)-succinylornithine and alpha-ketoglutarate into N(2)-succinylglutamate semialdehyde and glutamate. Can also act as an acetylornithine aminotransferase. This is Succinylornithine transaminase from Salmonella paratyphi B (strain ATCC BAA-1250 / SPB7).